Here is a 599-residue protein sequence, read N- to C-terminus: Dachshund homolog 2 (599 aa).

Residues 69–155 (RMVDMHGMKV…LITRKDFETL (87 aa)) are DACHbox-N. Disordered regions lie at residues 166-186 (RQMTRKQAVNSSRPGRPPKRS), 237-280 (LQGN…GPQH), and 370-409 (RIPESPSPAPSLEENHRPGSQTSSHTSSSVSSSPSQMDHH). Polar residues predominate over residues 237-262 (LQGNGSQNGTESEPDDLNSNTGGSES). A compositionally biased stretch (low complexity) spans 389–405 (SQTSSHTSSSVSSSPSQ). The interval 453-533 (SSVETLLTNI…KTKRKLQEAL (81 aa)) is DACHbox-C. Residues 459 to 554 (LTNIQGLLKV…QALKQATTSD (96 aa)) adopt a coiled-coil conformation.

The protein belongs to the DACH/dachshund family. As to quaternary structure, interacts with SIX6 and EYA2.

It is found in the nucleus. Functionally, transcription factor that is involved in regulation of organogenesis. Seems to be a regulator for SIX1 and SIX6. Seems to act as a corepressor of SIX6 in regulating proliferation by directly repressing cyclin-dependent kinase inhibitors, including the p27Kip1 promoter. Is recruited with SIX6 to the p27Kip1 promoter in embryonal retina. SIX6 corepression also seems to involve NCOR1, TBL1, HDAC1 and HDAC3. May be involved together with PAX3, SIX1, and EYA2 in regulation of myogenesis. In the developing somite, expression of DACH2 and PAX3 is regulated by the overlying ectoderm, and DACH2 and PAX3 positively regulate each other's expression. Probably binds to DNA via its DACHbox-N domain. The chain is Dachshund homolog 2 (DACH2) from Homo sapiens (Human).